A 262-amino-acid chain; its full sequence is MQQPIIGVGHSMGGCQIATLSVTSRRIFSTMILLDPAIGPPEMGLATLGLGQLTLRRRTQWLTREDAEKALRTSFSTWDPQVLDLLIKHSIHSDKQSVEMEDGPFSLVTGRYQELVNYIKPSFIRSGKVVGQELVHQTGPVDMYHMLGLVTCSTLYLCGGESTLSTPRARELWLSRTAELSYPKDPGEMRKVDERIVPDTGHFLPMEEPKECADIIADWIDKDECMIWNCHIGKQGKIWRDLSNTNRKMNAEVWMKYLQSKL.

Positions 260-262 (SKL) match the Peroxisomal targeting signal type 1 motif.

This sequence belongs to the AB hydrolase superfamily. AKT2 hydrolase family.

It localises to the peroxisome. Its pathway is mycotoxin biosynthesis. In terms of biological role, abhydrolase domain-containing protein; part of the gene clusters that mediate the biosynthesis of the host-selective toxins (HSTs) ACT-toxins responsible for brown spot of tangerine disease by the tangerine pathotype which affects tangerines and mandarins. ACT-toxins consist of three moieties, 9,10-epoxy-8-hydroxy-9-methyl-decatrienoic acid (EDA), valine and a polyketide. ACT-toxin I is toxic to both citrus and pear; toxin II the 5''-deoxy derivative of ACT-toxin I, is highly toxic to pear and slightly toxic to citrus. On cellular level, ACT-toxins affect plasma membrane of susceptible cells and cause a sudden increase in loss of K(+) after a few minutes of toxin treatment. The acyl-CoA ligase ACTT1, the hydrolase ACTT2, the enoyl-CoA hydratases ACTT3 and ACTT6, and the acyl-CoA synthetase ACTT5 are all involved in the biosynthesis of the AK-, AF- and ACT-toxin common 9,10-epoxy-8-hydroxy-9-methyl-decatrienoic acid (EDA) structural moiety. The exact role of each enzyme, and of additional enzymes identified within the AF-toxin clusters have still to be determined. On the other hand, ACTTS1 to ACTTS4 are specific to the tangerine pathotype. The function of ACTTS3 is to elongate the polyketide chain portion of ACT-toxin that is unique to this toxin. The enoyl-reductase ACTTS2 might complement the missing enoyl-reductase (ER) domain in ACTTS3 in the synthesis of the polyketide portion of ACT-toxin. The roles of the nonribosomal peptide synthetases-related proteins ACTTS1 and ACTTS4 have also still not been elucidated. This is Abhydrolase domain-containing protein ACTT2 from Alternaria alternata (Alternaria rot fungus).